We begin with the raw amino-acid sequence, 568 residues long: COMPASS component cclA (568 aa).

The segment at 1-113 (MASDSGTPPP…MRYKLAPPKP (113 aa)) is disordered. Basic and acidic residues-rich tracts occupy residues 68–77 (KESLKKRESK) and 89–98 (PDPKHREPKQ). The B30.2/SPRY domain maps to 160–353 (ADPGFPSSLY…IPIRFKQHIY (194 aa)).

Belongs to the cclA family. In terms of assembly, component of the COMPASS complex.

It localises to the nucleus. The protein localises to the chromosome. It is found in the telomere. Functionally, component of the COMPASS (Set1C) complex that specifically mono-, di- and trimethylates histone H3 to form H3K4me1/2/3, which subsequently plays a role in telomere length maintenance and transcription elongation regulation. Controls the production of several secondary metabolites, including colletochlorins, higginsianins and sclerosporide. Plays a key role in mycelial growth, sporulation, spore germination and virulence. In Colletotrichum higginsianum (strain IMI 349063) (Crucifer anthracnose fungus), this protein is COMPASS component cclA.